Reading from the N-terminus, the 341-residue chain is Transcription factor JunD (341 aa).

Residues 21 to 49 (VAGAAGAPGGGGFAPPGRAFPGAPPTSSM) form a disordered region. A Menin-binding motif (MBM) motif is present at residues 35-47 (PPGRAFPGAPPTS). The short motif at 51 to 60 (KKDALTLSLA) is the MAP kinase docking motif; essential for its phosphorylation element. Residues 65–85 (AGLKPGSATAPSALRPDGAPD) form a disordered region. Residue serine 90 is modified to Phosphoserine. Serine 100 is modified (phosphoserine; by MAPK8). Threonine 117 is modified (phosphothreonine). Residues 155 to 176 (AATAATSGAPAPPAPADLAATP) form a disordered region. Phosphoserine is present on residues serine 245, serine 249, and serine 253. Residues 262–289 (RIKAERKRLRNRIAASKCRKRKLERISR) form a basic motif region. Residues 262–325 (RIKAERKRLR…AQLKQKVLSH (64 aa)) form the bZIP domain. The leucine-zipper stretch occupies residues 290-318 (LEEKVKTLKSQNTELASTASLLREQVAQL).

Belongs to the bZIP family. Jun subfamily. Heterodimer; binds DNA as a heterodimer. Component of an AP-1 transcription factor complex composed of JUN-FOS heterodimers. As part of the AP-1 transcription factor complex, forms heterodimers with FOS proteins, thereby binding to the AP-1 consensus sequence and stimulating transcription. Forms heterodimers with FOSB; thereby binding to the AP-1 consensus sequence. Interacts (via MBM motif) with MEN1; this interaction represses transcriptional activation. Interacts with MAPK10; this interaction is inhibited in the presence of MEN1. Post-translationally, phosphorylated by MAP kinases MAPK8 and MAPK10; phosphorylation is inhibited in the presence of MEN1.

It localises to the nucleus. In terms of biological role, transcription factor binding AP-1 sites. Heterodimerizes with proteins of the FOS family to form an AP-1 transcription factor complex, thereby enhancing their DNA binding activity to an AP-1 consensus sequence 3'-TGA[GC]TCA-5' and enhancing their transcriptional activity. In Rattus norvegicus (Rat), this protein is Transcription factor JunD (Jund).